A 408-amino-acid chain; its full sequence is S-adenosylmethionine synthase (408 aa).

ATP is bound at residue 142–147 (GEGSGD).

Belongs to the AdoMet synthase 2 family. The cofactor is Mg(2+).

It carries out the reaction L-methionine + ATP + H2O = S-adenosyl-L-methionine + phosphate + diphosphate. Its pathway is amino-acid biosynthesis; S-adenosyl-L-methionine biosynthesis; S-adenosyl-L-methionine from L-methionine: step 1/1. In terms of biological role, catalyzes the formation of S-adenosylmethionine from methionine and ATP. The polypeptide is S-adenosylmethionine synthase (Halobacterium salinarum (strain ATCC 29341 / DSM 671 / R1)).